The sequence spans 506 residues: MTPVVALVGRPNVGKSTLFNRLTRTRDALVADFPGLTRDRKYGHANIAGYNFIVIDTGGIDGTEEGVEEKMAEQSLLAIEEADVVLFLVDARAGLVPADIGIAQYLRQREKTTVVVANKTDGIDADSHCAEFYQLGLGEVEQIAAAQGRGVTQLIDQVLAPLGEQLNADQAVENEENSANEEADEWDTDFDFENEDDTALLDEALEEETEESIEDKNIKIAIVGRPNVGKSTLTNRILGEERVVVYDMPGTTRDSIYIPMERDGQQYTIIDTAGVRKRGKVNLAVEKFSVIKTLQAIQDANVVLLTIDAREGISDQDLSLLGFILNAGRSLVIVVNKWDGLSQDIKDQVKSELDRRLDFIDFARVHFISALHGSGVGNLFDSVKEAYACATQKTSTSMLTRILRMAADEHQPPLVNGRRVKLKYAHPGGYNPPIIVIHGNQVEKLADSYKRYLSNYFRKSLKIIGSPIRIQFQEGNNPFAGKKNKLTPSQLRKRKRLMKFIKKSKK.

EngA-type G domains lie at 3-166 (PVVA…GEQL) and 218-391 (IKIA…ACAT). GTP-binding positions include 9–16 (GRPNVGKS), 56–60 (DTGGI), 118–121 (NKTD), 224–231 (GRPNVGKS), 271–275 (DTAGV), and 336–339 (NKWD). The 85-residue stretch at 392–476 (QKTSTSMLTR…PIRIQFQEGN (85 aa)) folds into the KH-like domain.

It belongs to the TRAFAC class TrmE-Era-EngA-EngB-Septin-like GTPase superfamily. EngA (Der) GTPase family. Associates with the 50S ribosomal subunit.

Functionally, GTPase that plays an essential role in the late steps of ribosome biogenesis. This is GTPase Der from Actinobacillus pleuropneumoniae serotype 3 (strain JL03).